Reading from the N-terminus, the 337-residue chain is Phosphate acyltransferase (337 aa).

Belongs to the PlsX family. In terms of assembly, homodimer. Probably interacts with PlsY.

The protein resides in the cytoplasm. The catalysed reaction is a fatty acyl-[ACP] + phosphate = an acyl phosphate + holo-[ACP]. It participates in lipid metabolism; phospholipid metabolism. Catalyzes the reversible formation of acyl-phosphate (acyl-PO(4)) from acyl-[acyl-carrier-protein] (acyl-ACP). This enzyme utilizes acyl-ACP as fatty acyl donor, but not acyl-CoA. This is Phosphate acyltransferase from Ehrlichia canis (strain Jake).